Here is a 226-residue protein sequence, read N- to C-terminus: Ribonuclease 3 (226 aa).

The RNase III domain occupies 7 to 129 (LPRLCRTLSY…IIGAVYLDSD (123 aa)). Glu-42 provides a ligand contact to Mg(2+). Asp-46 is a catalytic residue. The Mg(2+) site is built by Asp-115 and Glu-118. Residue Glu-118 is part of the active site. Residues 156-226 (DAKTLLQEHL…AAQVLELLKK (71 aa)) form the DRBM domain.

Belongs to the ribonuclease III family. As to quaternary structure, homodimer. Mg(2+) is required as a cofactor.

Its subcellular location is the cytoplasm. It carries out the reaction Endonucleolytic cleavage to 5'-phosphomonoester.. Functionally, digests double-stranded RNA. Involved in the processing of primary rRNA transcript to yield the immediate precursors to the large and small rRNAs (23S and 16S). Processes some mRNAs, and tRNAs when they are encoded in the rRNA operon. Processes pre-crRNA and tracrRNA of type II CRISPR loci if present in the organism. This is Ribonuclease 3 from Shewanella baltica (strain OS223).